The chain runs to 136 residues: Transcription antitermination protein NusB (136 aa).

This sequence belongs to the NusB family.

In terms of biological role, involved in transcription antitermination. Required for transcription of ribosomal RNA (rRNA) genes. Binds specifically to the boxA antiterminator sequence of the ribosomal RNA (rrn) operons. This Arthrobacter sp. (strain FB24) protein is Transcription antitermination protein NusB.